Here is a 427-residue protein sequence, read N- to C-terminus: Phosphatidylserine decarboxylase proenzyme 1, mitochondrial (427 aa).

Residues 1-77 (MRSYLRFSDR…RRFVYKLDQA (77 aa)) constitute a mitochondrion transit peptide. Over 78–88 (VTAALGPNGRY) the chain is Mitochondrial matrix. Residues 89-107 (IAMVGMTASAVLLTFHYKF) traverse the membrane as a helical segment. At 108–427 (REVIAATDNV…TEDERLFAFY (320 aa)) the chain is on the mitochondrial intermembrane side. Catalysis depends on charge relay system; for autoendoproteolytic cleavage activity residues Asp210, His268, and Ser379. Catalysis depends on Ser379, which acts as the Schiff-base intermediate with substrate; via pyruvic acid; for decarboxylase activity. Ser379 carries the post-translational modification Pyruvic acid (Ser); by autocatalysis.

The protein belongs to the phosphatidylserine decarboxylase family. PSD-B subfamily. Eukaryotic type I sub-subfamily. In terms of assembly, heterodimer of a large membrane-associated beta subunit and a small pyruvoyl-containing alpha subunit. Pyruvate is required as a cofactor. Is synthesized initially as an inactive proenzyme. Formation of the active enzyme involves a self-maturation process in which the active site pyruvoyl group is generated from an internal serine residue via an autocatalytic post-translational modification. Two non-identical subunits are generated from the proenzyme in this reaction, and the pyruvate is formed at the N-terminus of the alpha chain, which is derived from the carboxyl end of the proenzyme. The autoendoproteolytic cleavage occurs by a canonical serine protease mechanism, in which the side chain hydroxyl group of the serine supplies its oxygen atom to form the C-terminus of the beta chain, while the remainder of the serine residue undergoes an oxidative deamination to produce ammonia and the pyruvoyl prosthetic group on the alpha chain. During this reaction, the Ser that is part of the protease active site of the proenzyme becomes the pyruvoyl prosthetic group, which constitutes an essential element of the active site of the mature decarboxylase.

It localises to the mitochondrion. The protein resides in the mitochondrion inner membrane. The catalysed reaction is a 1,2-diacyl-sn-glycero-3-phospho-L-serine + H(+) = a 1,2-diacyl-sn-glycero-3-phosphoethanolamine + CO2. Its pathway is phospholipid metabolism; phosphatidylethanolamine biosynthesis; phosphatidylethanolamine from CDP-diacylglycerol: step 2/2. Its function is as follows. Catalyzes the formation of phosphatidylethanolamine (PtdEtn) from phosphatidylserine (PtdSer). Plays a central role in phospholipid metabolism and in the interorganelle trafficking of phosphatidylserine. The chain is Phosphatidylserine decarboxylase proenzyme 1, mitochondrial from Toxoplasma gondii (strain ATCC 50853 / GT1).